We begin with the raw amino-acid sequence, 207 residues long: MEGDSRAATASQYQPACPTRDACVYSSCYCEENIWKLCEYIKTHNQYLLEECYAVFISNEKKMVPIWKQQARPENGPVIWDYHVVLLHVSREGQSFIYDLDTILPFPCPFDIYIEDALKSDDDIHPQFRRKFRVVRADSYLKNFASDRSHMKDSSGNWREPPPEYPCIETGDSKMNLNDFISMDPAVGWGAVYTLSEFVHRFSSKNY.

Residues C30, H83, and D99 contribute to the active site.

This sequence belongs to the NTAQ1 family. Monomer.

It is found in the cytoplasm. Its subcellular location is the cytosol. It localises to the nucleus. It catalyses the reaction N-terminal L-glutaminyl-[protein] + H2O = N-terminal L-glutamyl-[protein] + NH4(+). Functionally, mediates the side-chain deamidation of N-terminal glutamine residues to glutamate, an important step in N-end rule pathway of protein degradation. Conversion of the resulting N-terminal glutamine to glutamate renders the protein susceptible to arginylation, polyubiquitination and degradation as specified by the N-end rule. Does not act on substrates with internal or C-terminal glutamine and does not act on non-glutamine residues in any position. Does not deaminate acetylated N-terminal glutamine. With the exception of proline, all tested second-position residues on substrate peptides do not greatly influence the activity. In contrast, a proline at position 2, virtually abolishes deamidation of N-terminal glutamine. This Rattus norvegicus (Rat) protein is Protein N-terminal glutamine amidohydrolase (Ntaq1).